The chain runs to 417 residues: RH-like protein ID (417 aa).

The next 11 membrane-spanning stretches (helical) occupy residues 12–32 (CLPLCALTLEAALTLLFYFFT), 44–64 (LVASYQVGQDLTVMAAIGFGF), 77–97 (VAFNLFMLALGVQWAILLDGF), 125–145 (ISAGAVLGYVNLVQLVVMVLV), 172–192 (IYVFAACFGLSVAWCLPKPLA), 203–223 (TIPSLSAMLGALFLWMFWPSF), 238–258 (VFNTYYAVAVSVVTAISVSSL), 265–285 (INMTYMHNAVLAGGVAVATSC), 287–307 (LIPSPWLAMVLGLVAGLISIG), 331–351 (NFSLLGLLGEIIYIVLLVLDT), and 358–378 (MVGFQVLVSIGELSLAIVIAL).

This sequence belongs to the ammonium transporter (TC 2.A.49) family. Rh subfamily.

The protein localises to the membrane. In terms of biological role, may be part of an oligomeric complex which is likely to have a transport or channel function in the erythrocyte membrane. This chain is RH-like protein ID, found in Gorilla gorilla gorilla (Western lowland gorilla).